A 242-amino-acid polypeptide reads, in one-letter code: Uridylate kinase (242 aa).

An ATP-binding site is contributed by 16–19 (KISG). The tract at residues 24-29 (GDQGFG) is involved in allosteric activation by GTP. A UMP-binding site is contributed by G58. Residues G59 and R63 each contribute to the ATP site. UMP-binding positions include D78 and 139-146 (TGNPYFTT). ATP contacts are provided by T166, Y172, and D175.

Belongs to the UMP kinase family. As to quaternary structure, homohexamer.

It is found in the cytoplasm. The enzyme catalyses UMP + ATP = UDP + ADP. Its pathway is pyrimidine metabolism; CTP biosynthesis via de novo pathway; UDP from UMP (UMPK route): step 1/1. With respect to regulation, allosterically activated by GTP. Inhibited by UTP. Catalyzes the reversible phosphorylation of UMP to UDP. The sequence is that of Uridylate kinase from Roseobacter denitrificans (strain ATCC 33942 / OCh 114) (Erythrobacter sp. (strain OCh 114)).